A 147-amino-acid polypeptide reads, in one-letter code: MAGSKSPKGEFAGRKLLLKRKASRWHHYKYVNKALSLKLKADPLEGAPMGRGIVIEKVGLEAKQPNSAIRKCVRVQLIKNGRQVTAFAPGNHAINFIDEHDEVVIEGIGGPSGQAKGDIPGVRYKVVLVGKNSIRELVRGRQEKVKR.

This sequence belongs to the universal ribosomal protein uS12 family. Part of the 30S ribosomal subunit.

Its function is as follows. With S4 and S5 plays an important role in translational accuracy. Located at the interface of the 30S and 50S subunits. The chain is Small ribosomal subunit protein uS12 from Methanococcus maripaludis (strain DSM 14266 / JCM 13030 / NBRC 101832 / S2 / LL).